Consider the following 111-residue polypeptide: MEVTAKLKGAPLSAQKGRLVADMIRNMNVSGALDVLKFTPKKGAKLMLKLLESAIANAENNNGADIDDLKVGMVCVDEATTLKRISPRAKGRANRICKRTCHITIKVSDEE.

This sequence belongs to the universal ribosomal protein uL22 family. As to quaternary structure, part of the 50S ribosomal subunit.

Its function is as follows. This protein binds specifically to 23S rRNA; its binding is stimulated by other ribosomal proteins, e.g. L4, L17, and L20. It is important during the early stages of 50S assembly. It makes multiple contacts with different domains of the 23S rRNA in the assembled 50S subunit and ribosome. Functionally, the globular domain of the protein is located near the polypeptide exit tunnel on the outside of the subunit, while an extended beta-hairpin is found that lines the wall of the exit tunnel in the center of the 70S ribosome. This is Large ribosomal subunit protein uL22 from Legionella pneumophila (strain Lens).